The chain runs to 190 residues: Nucleoside triphosphate pyrophosphatase (190 aa).

Catalysis depends on D69, which acts as the Proton acceptor.

This sequence belongs to the Maf family. It depends on a divalent metal cation as a cofactor.

It is found in the cytoplasm. It catalyses the reaction a ribonucleoside 5'-triphosphate + H2O = a ribonucleoside 5'-phosphate + diphosphate + H(+). The enzyme catalyses a 2'-deoxyribonucleoside 5'-triphosphate + H2O = a 2'-deoxyribonucleoside 5'-phosphate + diphosphate + H(+). Nucleoside triphosphate pyrophosphatase. May have a dual role in cell division arrest and in preventing the incorporation of modified nucleotides into cellular nucleic acids. The sequence is that of Nucleoside triphosphate pyrophosphatase from Helicobacter pylori (strain HPAG1).